Here is a 120-residue protein sequence, read N- to C-terminus: Basic phospholipase A2 Cc2-PLA2 (120 aa).

Disulfide bonds link Cys-26-Cys-113, Cys-28-Cys-44, Cys-43-Cys-95, Cys-49-Cys-120, Cys-50-Cys-88, Cys-57-Cys-81, and Cys-75-Cys-86. Ca(2+) is bound by residues Tyr-27, Gly-29, and Gly-31. Residue His-47 is part of the active site. Asp-48 is a Ca(2+) binding site. Asp-89 is a catalytic residue.

It belongs to the phospholipase A2 family. Group II subfamily. D49 sub-subfamily. Monomer. Ca(2+) serves as cofactor. Expressed by the venom gland.

The protein localises to the secreted. It catalyses the reaction a 1,2-diacyl-sn-glycero-3-phosphocholine + H2O = a 1-acyl-sn-glycero-3-phosphocholine + a fatty acid + H(+). Its function is as follows. Basic phospholipase A2 that inhibits ADP-, thrombin- and arachidonic acid-induced platelet aggregation. It also exhibits anticoagulant effects upon human plasma in vitro. It induces a high hemolytic activity reaching its maximum after 24 hours. It induces a marked elevation of plasmatic levels of interleukin-6 and -10, eosinophil peroxidase and complement lytic activities and it also provokes a drastic increase of lymphocytes, monocytes and neutrophils in peripheral blood accompanied by a rapid intense migration of neutrophils to the peritoneal cavity. PLA2 catalyzes the calcium-dependent hydrolysis of the 2-acyl groups in 3-sn-phosphoglycerides. The protein is Basic phospholipase A2 Cc2-PLA2 of Cerastes cerastes (Horned desert viper).